We begin with the raw amino-acid sequence, 305 residues long: Ribonuclease BN (305 aa).

Residues histidine 64, histidine 66, aspartate 68, histidine 69, histidine 141, aspartate 212, and histidine 270 each coordinate Zn(2+). Aspartate 68 serves as the catalytic Proton acceptor.

It belongs to the RNase Z family. RNase BN subfamily. Homodimer. Zn(2+) serves as cofactor.

Functionally, zinc phosphodiesterase, which has both exoribonuclease and endoribonuclease activities. The protein is Ribonuclease BN of Salmonella paratyphi C (strain RKS4594).